We begin with the raw amino-acid sequence, 226 residues long: Putative N-acetylmannosamine-6-phosphate 2-epimerase 1 (226 aa).

It belongs to the NanE family.

The catalysed reaction is an N-acyl-D-glucosamine 6-phosphate = an N-acyl-D-mannosamine 6-phosphate. The protein operates within amino-sugar metabolism; N-acetylneuraminate degradation; D-fructose 6-phosphate from N-acetylneuraminate: step 3/5. Functionally, converts N-acetylmannosamine-6-phosphate (ManNAc-6-P) to N-acetylglucosamine-6-phosphate (GlcNAc-6-P). In Salmonella paratyphi A (strain ATCC 9150 / SARB42), this protein is Putative N-acetylmannosamine-6-phosphate 2-epimerase 1.